A 211-amino-acid chain; its full sequence is C-type lectin domain-containing protein 158 (211 aa).

An N-terminal signal peptide occupies residues 1–16 (MQKFILSAFVVALVAA).

The sequence is that of C-type lectin domain-containing protein 158 (clec-158) from Caenorhabditis elegans.